A 271-amino-acid polypeptide reads, in one-letter code: Putative pyruvate, phosphate dikinase regulatory protein (271 aa).

153-160 (GVSRTSKT) contributes to the ADP binding site.

The protein belongs to the pyruvate, phosphate/water dikinase regulatory protein family. PDRP subfamily.

It carries out the reaction N(tele)-phospho-L-histidyl/L-threonyl-[pyruvate, phosphate dikinase] + ADP = N(tele)-phospho-L-histidyl/O-phospho-L-threonyl-[pyruvate, phosphate dikinase] + AMP + H(+). The catalysed reaction is N(tele)-phospho-L-histidyl/O-phospho-L-threonyl-[pyruvate, phosphate dikinase] + phosphate + H(+) = N(tele)-phospho-L-histidyl/L-threonyl-[pyruvate, phosphate dikinase] + diphosphate. In terms of biological role, bifunctional serine/threonine kinase and phosphorylase involved in the regulation of the pyruvate, phosphate dikinase (PPDK) by catalyzing its phosphorylation/dephosphorylation. This Shouchella clausii (strain KSM-K16) (Alkalihalobacillus clausii) protein is Putative pyruvate, phosphate dikinase regulatory protein.